Here is a 509-residue protein sequence, read N- to C-terminus: MSLDVNASEVLRIIKEKIKDFDQQIFSEEIGEVISVKDGVVIACGLENAEFNEKVVFPNGEIGLIQSIEYDHVGIVILTNTQDIKEGDTVRRTKEALRIPVGKKLLGRVIDPLGNPLDGAGQIFADAYSPIEVKAPGILDRQSVKEPLQTGIKVIDLLIPIGRGQRELIIGDRQTGKTTIALDSIINQRDINKNLPDEKKLYCVYVAIGQKCSTVARIMKTLQEQGAMDYTTIVLAGASDSAQSQFLAPYAGCSIGEYFRDNGMHCLIVYDDLSKHAVAYRQMSLLLRRPPGREAYPGDVFYIHSRLLERAAKMSDKHGAGSLTALPIIETQAGDVSAYIPTNVISITDGQIFLETELFNKGVKPAVNVGLSVSRVGSAAQIKAIKQVARSIKLELAQYREMEAFAQFGADLDETTQALLEKGKKLTELLKQNQHETLPVEEQVVLMFAANEGYFDNIDVTGISTAAKNLLGSFRLYHRDLLEDIKEKSIIGDLASLSSALQGCKTTNA.

171–178 (GDRQTGKT) serves as a coordination point for ATP.

This sequence belongs to the ATPase alpha/beta chains family. In terms of assembly, F-type ATPases have 2 components, CF(1) - the catalytic core - and CF(0) - the membrane proton channel. CF(1) has five subunits: alpha(3), beta(3), gamma(1), delta(1), epsilon(1). CF(0) has three main subunits: a(1), b(2) and c(9-12). The alpha and beta chains form an alternating ring which encloses part of the gamma chain. CF(1) is attached to CF(0) by a central stalk formed by the gamma and epsilon chains, while a peripheral stalk is formed by the delta and b chains.

It localises to the cell inner membrane. The enzyme catalyses ATP + H2O + 4 H(+)(in) = ADP + phosphate + 5 H(+)(out). Produces ATP from ADP in the presence of a proton gradient across the membrane. The alpha chain is a regulatory subunit. The sequence is that of ATP synthase subunit alpha from Neorickettsia sennetsu (strain ATCC VR-367 / Miyayama) (Ehrlichia sennetsu).